We begin with the raw amino-acid sequence, 128 residues long: MDIPKDRFYTKTHEWALPEGDTVLVGITDYAQDALGDVVYVELPEVGRVVEKGEAVAVVESVKTASDIYAPVAGEIVEVNLALEKTPELVNQDPYGEGWIFRLKPRDMGDLDELLDAGGYQEVLESEA.

Positions 22–104 constitute a Lipoyl-binding domain; the sequence is TVLVGITDYA…YGEGWIFRLK (83 aa). Position 63 is an N6-lipoyllysine (Lys63).

It belongs to the GcvH family. In terms of assembly, the glycine cleavage system is composed of four proteins: P, T, L and H. Monomer. (R)-lipoate is required as a cofactor.

Functionally, the glycine cleavage system catalyzes the degradation of glycine. The H protein shuttles the methylamine group of glycine from the P protein to the T protein. The polypeptide is Glycine cleavage system H protein (Thermus thermophilus (strain ATCC 27634 / DSM 579 / HB8)).